An 82-amino-acid polypeptide reads, in one-letter code: ATP synthase subunit 9, mitochondrial (82 aa).

The next 2 helical transmembrane spans lie at 8–28 (IGAGAATIASAGAAIGIGNVF) and 45–67 (SFGYAILGFALTEAIASFAPMMA).

The protein belongs to the ATPase C chain family. In terms of assembly, F-type ATPases have 2 components, CF(1) - the catalytic core - and CF(0) - the membrane proton channel. CF(1) has five subunits: alpha(3), beta(3), gamma(1), delta(1), epsilon(1). CF(0) has three main subunits: a, b and c.

It is found in the mitochondrion membrane. In terms of biological role, this protein is one of the chains of the nonenzymatic membrane component (F0) of mitochondrial ATPase. The chain is ATP synthase subunit 9, mitochondrial (ATP9) from Malus domestica (Apple).